The following is a 183-amino-acid chain: ATP synthase subunit delta (183 aa).

It belongs to the ATPase delta chain family. In terms of assembly, F-type ATPases have 2 components, F(1) - the catalytic core - and F(0) - the membrane proton channel. F(1) has five subunits: alpha(3), beta(3), gamma(1), delta(1), epsilon(1). F(0) has three main subunits: a(1), b(2) and c(10-14). The alpha and beta chains form an alternating ring which encloses part of the gamma chain. F(1) is attached to F(0) by a central stalk formed by the gamma and epsilon chains, while a peripheral stalk is formed by the delta and b chains.

Its subcellular location is the cell inner membrane. In terms of biological role, f(1)F(0) ATP synthase produces ATP from ADP in the presence of a proton or sodium gradient. F-type ATPases consist of two structural domains, F(1) containing the extramembraneous catalytic core and F(0) containing the membrane proton channel, linked together by a central stalk and a peripheral stalk. During catalysis, ATP synthesis in the catalytic domain of F(1) is coupled via a rotary mechanism of the central stalk subunits to proton translocation. Its function is as follows. This protein is part of the stalk that links CF(0) to CF(1). It either transmits conformational changes from CF(0) to CF(1) or is implicated in proton conduction. This is ATP synthase subunit delta from Nitratidesulfovibrio vulgaris (strain ATCC 29579 / DSM 644 / CCUG 34227 / NCIMB 8303 / VKM B-1760 / Hildenborough) (Desulfovibrio vulgaris).